Consider the following 145-residue polypeptide: Ribosomal RNA large subunit methyltransferase H (145 aa).

Residues leucine 68, glycine 95, and 113 to 118 (FSKMTF) contribute to the S-adenosyl-L-methionine site.

It belongs to the RNA methyltransferase RlmH family. In terms of assembly, homodimer.

It is found in the cytoplasm. The catalysed reaction is pseudouridine(1915) in 23S rRNA + S-adenosyl-L-methionine = N(3)-methylpseudouridine(1915) in 23S rRNA + S-adenosyl-L-homocysteine + H(+). Specifically methylates the pseudouridine at position 1915 (m3Psi1915) in 23S rRNA. This chain is Ribosomal RNA large subunit methyltransferase H, found in Mycoplasmopsis pulmonis (strain UAB CTIP) (Mycoplasma pulmonis).